The sequence spans 433 residues: MSRSTSTELQQELPASKEVPPDPTSIASSETASGSKPPSTEFTPRAILVLVGSFLVTFCSVGFTNAFGVFQTYYQEAFLSDKSSSDISWIGSFNIFCMFGCTFISGYLTDRYGPRLLICFGSLVMVFALFMLSLSTEYYQIFLTQAFLFGVGISFVLLPAMATVSLYFAKSRSLAMGIIVSGSSLGGVIWPIALDRLFNEVSFGWTVRIAAFIMLPLLGLACLAIRRPAEFANRPKPKADFSCVKNPVMIFLAIGLFLIFLGLFSPFFYVTSYMISLGKDSNLAFYMVSVVNASSLFGRILPGLIADRVGNYNVLFMVAVFSGLVACCWTKATSVGGIVVFSLAYGLASGAVISLQGPCAAQTVQREQFGVAMGVVMTFLSIAGLVGTPINGQILIPYGYLGLSLFSGLVMLLGSVFILLARLKIKTGLLVKA.

2 stretches are compositionally biased toward polar residues: residues 1-10 (MSRSTSTELQ) and 25-40 (SIAS…PPST). The disordered stretch occupies residues 1–40 (MSRSTSTELQQELPASKEVPPDPTSIASSETASGSKPPST). The next 12 membrane-spanning stretches (helical) occupy residues 47–67 (ILVL…TNAF), 87–107 (ISWI…ISGY), 116–136 (LLIC…SLST), 141–161 (IFLT…LPAM), 174–194 (LAMG…PIAL), 205–225 (WTVR…CLAI), 248–268 (VMIF…SPFF), 285–305 (FYMV…PGLI), 309–329 (VGNY…ACCW), 335–355 (VGGI…VISL), 370–390 (GVAM…GTPI), and 401–421 (LGLS…ILLA).

The protein belongs to the major facilitator superfamily. Monocarboxylate porter (TC 2.A.1.13) family.

It is found in the cell membrane. Efflux pump that may be involved in the secretion of agnestins, dihydroxy-xanthone metabolites. The protein is Agnestins efflux protein AgnL12 of Paecilomyces divaricatus (Penicillium divaricatum).